A 106-amino-acid chain; its full sequence is Trp operon repressor homolog (106 aa).

Residues 59–82 (QREIQQILNTSAATITRGSNMIKI) mediate DNA binding.

It belongs to the TrpR family. In terms of assembly, homodimer.

The protein localises to the cytoplasm. In terms of biological role, this protein is an aporepressor. When complexed with L-tryptophan it binds the operator region of the trp operon and prevents the initiation of transcription. The chain is Trp operon repressor homolog from Histophilus somni (strain 129Pt) (Haemophilus somnus).